The sequence spans 423 residues: UPF0597 protein TTE0269 (423 aa).

The protein belongs to the UPF0597 family.

The chain is UPF0597 protein TTE0269 from Caldanaerobacter subterraneus subsp. tengcongensis (strain DSM 15242 / JCM 11007 / NBRC 100824 / MB4) (Thermoanaerobacter tengcongensis).